We begin with the raw amino-acid sequence, 155 residues long: Vasotocin-neurophysin VT 1 (155 aa).

Residues 1-20 (MPDSTIPLLCVLGLLALSSA) form the signal peptide. A disulfide bridge connects residues Cys-21 and Cys-26. Glycine amide is present on Gly-29. 7 disulfides stabilise this stretch: Cys-41–Cys-85, Cys-44–Cys-58, Cys-52–Cys-75, Cys-59–Cys-65, Cys-92–Cys-105, Cys-99–Cys-117, and Cys-106–Cys-111.

It belongs to the vasopressin/oxytocin family. Seven disulfide bonds are present in neurophysin.

The protein localises to the secreted. Its function is as follows. Vasotocin is probably an antidiuretic hormone. This Oncorhynchus masou (Cherry salmon) protein is Vasotocin-neurophysin VT 1.